Consider the following 446-residue polypeptide: High mobility group B protein 13 (446 aa).

Disordered stretches follow at residues 1–43 (MSTV…TKSF) and 110–130 (LAQT…AETK). Residues 11 to 22 (AKKSRNSRKALK) show a composition bias toward basic residues. DNA-binding regions (HMG box) lie at residues 129–197 (TKRP…TKEK) and 246–312 (PKQP…EGYK). Residues 349-371 (NIIKKTKETAKNKKKNENVDPNK) are compositionally biased toward basic and acidic residues. The interval 349 to 377 (NIIKKTKETAKNKKKNENVDPNKPKKPTS) is disordered. Positions 372 to 440 (PKKPTSSYFL…AYKKEVEEYN (69 aa)) form a DNA-binding region, HMG box 3.

The protein belongs to the HMGB family.

The protein localises to the nucleus. The protein is High mobility group B protein 13 (HMGB13) of Arabidopsis thaliana (Mouse-ear cress).